Consider the following 431-residue polypeptide: Enolase (431 aa).

A (2R)-2-phosphoglycerate-binding site is contributed by Gln-168. The active-site Proton donor is the Glu-210. Asp-247, Glu-291, and Asp-318 together coordinate Mg(2+). (2R)-2-phosphoglycerate-binding residues include Lys-343, Arg-372, Ser-373, and Lys-394. Catalysis depends on Lys-343, which acts as the Proton acceptor.

This sequence belongs to the enolase family. As to quaternary structure, component of the RNA degradosome, a multiprotein complex involved in RNA processing and mRNA degradation. Requires Mg(2+) as cofactor.

It localises to the cytoplasm. The protein localises to the secreted. It is found in the cell surface. The catalysed reaction is (2R)-2-phosphoglycerate = phosphoenolpyruvate + H2O. It functions in the pathway carbohydrate degradation; glycolysis; pyruvate from D-glyceraldehyde 3-phosphate: step 4/5. Its function is as follows. Catalyzes the reversible conversion of 2-phosphoglycerate (2-PG) into phosphoenolpyruvate (PEP). It is essential for the degradation of carbohydrates via glycolysis. This Acinetobacter baumannii (strain SDF) protein is Enolase.